The sequence spans 605 residues: Formin-binding protein 1-like (605 aa).

The F-BAR domain occupies 1-263 (MSWGTELWDQ…AAKSVDERRD (263 aa)). The stretch at 66–258 (FTSCIAFFNI…EGMILAAKSV (193 aa)) forms a coiled coil. The tract at residues 245 to 535 (SKCLEGMILA…EFDDEFEDDD (291 aa)) is interaction with CDC42. S295 carries the phosphoserine modification. Positions 392–484 (LEDFSHLPPE…VEGKTGIRGD (93 aa)) form a coiled coil. The REM-1 domain maps to 397 to 474 (HLPPEQRRKK…IHKNEAWLSE (78 aa)). The interval 482–538 (RGDRRHSSDINHLVTQGRESPEGSYTDDANQEVRGPPQQHGHHSEFDDEFEDDDPLP) is disordered. Residues S488, S501, and S505 each carry the phosphoserine modification. Residues 522–605 (GHHSEFDDEF…VTLEKSSKGS (84 aa)) are interaction with DNM1. A compositionally biased stretch (acidic residues) spans 527-536 (FDDEFEDDDP). The SH3 domain maps to 538-599 (PAIGHCKAIY…PTTYIDVTLE (62 aa)). Residues 541–597 (GHCKAIYPFDGHNEGTLAMKEGEVLYIIEEDKGDGWTRARRQNGEEGYVPTTYIDVT) form an interaction with DNM2 and WASL region. The tract at residues 541–605 (GHCKAIYPFD…VTLEKSSKGS (65 aa)) is interaction with DAAM1, DIAPH1 and DIAPH2.

Belongs to the FNBP1 family. As to quaternary structure, homodimerizes, the dimers can polymerize end-to-end to form filamentous structures. Interacts with GTP-bound CDC42. Interacts with DAAM1, DIAPH1, DIAPH2, DNM1, DNM2 and WASL/N-WASP. Interacts with ATG3. Interacts (via SH3 domain) with ABI1, WASF2, CDC42 and WIPF1.

It localises to the cytoplasm. It is found in the cytoskeleton. The protein localises to the cell cortex. The protein resides in the cytoplasmic vesicle. Its subcellular location is the cell membrane. In terms of biological role, required to coordinate membrane tubulation with reorganization of the actin cytoskeleton during endocytosis. May bind to lipids such as phosphatidylinositol 4,5-bisphosphate and phosphatidylserine and promote membrane invagination and the formation of tubules. Also promotes CDC42-induced actin polymerization by activating the WASL-WASPIP complex, the predominant form of WASL/N-WASP in cells. Actin polymerization may promote the fission of membrane tubules to form endocytic vesicles. Essential for autophagy of intracellular bacterial pathogens. This is Formin-binding protein 1-like (Fnbp1l) from Mus musculus (Mouse).